The following is a 315-amino-acid chain: Probable cytochrome c oxidase subunit 2 (315 aa).

In terms of domain architecture, RPE1 insert spans Arg6 to Ser53. A run of 3 helical transmembrane segments spans residues Tyr41–Ile61, Leu96–Ile116, and Val133–Pro153. Cu cation contacts are provided by His235, Cys270, Cys274, and His278.

It belongs to the cytochrome c oxidase subunit 2 family. Cu cation is required as a cofactor. It depends on heme as a cofactor.

It is found in the cell membrane. It catalyses the reaction 4 Fe(II)-[cytochrome c] + O2 + 8 H(+)(in) = 4 Fe(III)-[cytochrome c] + 2 H2O + 4 H(+)(out). Its function is as follows. Subunits I and II form the functional core of the enzyme complex. Electrons originating in cytochrome c are transferred via heme a and Cu(A) to the binuclear center formed by heme a3 and Cu(B). This chain is Probable cytochrome c oxidase subunit 2 (ctaC), found in Rickettsia felis (strain ATCC VR-1525 / URRWXCal2) (Rickettsia azadi).